A 398-amino-acid polypeptide reads, in one-letter code: 1-deoxy-D-xylulose 5-phosphate reductoisomerase (398 aa).

NADPH is bound by residues T11, G12, S13, I14, and N125. Position 126 (K126) interacts with 1-deoxy-D-xylulose 5-phosphate. NADPH is bound at residue E127. D151 provides a ligand contact to Mn(2+). Residues S152, E153, S186, and H209 each coordinate 1-deoxy-D-xylulose 5-phosphate. E153 contributes to the Mn(2+) binding site. Position 215 (G215) interacts with NADPH. Positions 222, 227, 228, and 231 each coordinate 1-deoxy-D-xylulose 5-phosphate. E231 is a binding site for Mn(2+).

This sequence belongs to the DXR family. Mg(2+) serves as cofactor. Mn(2+) is required as a cofactor.

The catalysed reaction is 2-C-methyl-D-erythritol 4-phosphate + NADP(+) = 1-deoxy-D-xylulose 5-phosphate + NADPH + H(+). It functions in the pathway isoprenoid biosynthesis; isopentenyl diphosphate biosynthesis via DXP pathway; isopentenyl diphosphate from 1-deoxy-D-xylulose 5-phosphate: step 1/6. In terms of biological role, catalyzes the NADPH-dependent rearrangement and reduction of 1-deoxy-D-xylulose-5-phosphate (DXP) to 2-C-methyl-D-erythritol 4-phosphate (MEP). The chain is 1-deoxy-D-xylulose 5-phosphate reductoisomerase from Acinetobacter baumannii (strain AB307-0294).